The sequence spans 1590 residues: Pentafunctional AROM polypeptide (1590 aa).

The 3-dehydroquinate synthase stretch occupies residues 1 to 400 (MSTANGSSPT…HEPKASSVDD (400 aa)). NAD(+)-binding positions include 49–51 (DTN), 96–99 (EGSK), 127–129 (GGV), and aspartate 132. Arginine 143 contacts 7-phospho-2-dehydro-3-deoxy-D-arabino-heptonate. An NAD(+)-binding site is contributed by 152–153 (TT). Residues aspartate 159 and lysine 165 each coordinate 7-phospho-2-dehydro-3-deoxy-D-arabino-heptonate. Lysine 174 is a binding site for NAD(+). Asparagine 175 contacts 7-phospho-2-dehydro-3-deoxy-D-arabino-heptonate. NAD(+)-binding positions include 192–195 (FLNT) and asparagine 203. Glutamate 207 contacts Zn(2+). Residues 207–210 (EVIK) and lysine 266 each bind 7-phospho-2-dehydro-3-deoxy-D-arabino-heptonate. Catalysis depends on glutamate 276, which acts as the Proton acceptor; for 3-dehydroquinate synthase activity. 7-phospho-2-dehydro-3-deoxy-D-arabino-heptonate-binding positions include 280 to 284 (RNLLN) and histidine 287. Position 287 (histidine 287) interacts with Zn(2+). Histidine 291 (proton acceptor; for 3-dehydroquinate synthase activity) is an active-site residue. 7-phospho-2-dehydro-3-deoxy-D-arabino-heptonate contacts are provided by histidine 303 and lysine 372. Histidine 303 is a Zn(2+) binding site. The tract at residues 413 to 856 (VQPGVRPGLK…WDVLSGVFGV (444 aa)) is EPSP synthase. The active-site For EPSP synthase activity is the cysteine 838. Residues 876 to 1070 (NRSVFVIGMR…KAKPHSFFVS (195 aa)) are shikimate kinase. 883 to 890 (GMRGAGKS) serves as a coordination point for ATP. Residues 1071 to 1285 (LTVPNITAHT…AAPGQLTAAE (215 aa)) form a 3-dehydroquinase region. The Proton acceptor; for 3-dehydroquinate dehydratase activity role is filled by histidine 1187. Catalysis depends on lysine 1215, which acts as the Schiff-base intermediate with substrate; for 3-dehydroquinate dehydratase activity. The shikimate dehydrogenase stretch occupies residues 1298–1590 (KRKFYLFGKP…IVMNGTSDSS (293 aa)).

This sequence in the N-terminal section; belongs to the sugar phosphate cyclases superfamily. Dehydroquinate synthase family. In the 2nd section; belongs to the EPSP synthase family. It in the 3rd section; belongs to the shikimate kinase family. The protein in the 4th section; belongs to the type-I 3-dehydroquinase family. This sequence in the C-terminal section; belongs to the shikimate dehydrogenase family. In terms of assembly, homodimer. Zn(2+) is required as a cofactor.

Its subcellular location is the cytoplasm. The catalysed reaction is 7-phospho-2-dehydro-3-deoxy-D-arabino-heptonate = 3-dehydroquinate + phosphate. The enzyme catalyses 3-dehydroquinate = 3-dehydroshikimate + H2O. It catalyses the reaction shikimate + NADP(+) = 3-dehydroshikimate + NADPH + H(+). It carries out the reaction shikimate + ATP = 3-phosphoshikimate + ADP + H(+). The catalysed reaction is 3-phosphoshikimate + phosphoenolpyruvate = 5-O-(1-carboxyvinyl)-3-phosphoshikimate + phosphate. The protein operates within metabolic intermediate biosynthesis; chorismate biosynthesis; chorismate from D-erythrose 4-phosphate and phosphoenolpyruvate: step 2/7. It participates in metabolic intermediate biosynthesis; chorismate biosynthesis; chorismate from D-erythrose 4-phosphate and phosphoenolpyruvate: step 3/7. Its pathway is metabolic intermediate biosynthesis; chorismate biosynthesis; chorismate from D-erythrose 4-phosphate and phosphoenolpyruvate: step 4/7. It functions in the pathway metabolic intermediate biosynthesis; chorismate biosynthesis; chorismate from D-erythrose 4-phosphate and phosphoenolpyruvate: step 5/7. The protein operates within metabolic intermediate biosynthesis; chorismate biosynthesis; chorismate from D-erythrose 4-phosphate and phosphoenolpyruvate: step 6/7. Functionally, the AROM polypeptide catalyzes 5 consecutive enzymatic reactions in prechorismate polyaromatic amino acid biosynthesis. This chain is Pentafunctional AROM polypeptide, found in Pyricularia oryzae (strain 70-15 / ATCC MYA-4617 / FGSC 8958) (Rice blast fungus).